Reading from the N-terminus, the 884-residue chain is DNA mismatch repair protein MutS (884 aa).

Residue 643-650 coordinates ATP; that stretch reads GPNMGGKS.

The protein belongs to the DNA mismatch repair MutS family.

Functionally, this protein is involved in the repair of mismatches in DNA. It is possible that it carries out the mismatch recognition step. This protein has a weak ATPase activity. The protein is DNA mismatch repair protein MutS of Methylobacillus flagellatus (strain ATCC 51484 / DSM 6875 / VKM B-1610 / KT).